Consider the following 428-residue polypeptide: Putative heme-binding peroxidase (428 aa).

The tract at residues 1–33 (MTAIQKPVVAKREAPKAEVNPTVSRSTQTETIK) is disordered. Polar residues predominate over residues 21-32 (PTVSRSTQTETI). H188 serves as the catalytic Proton acceptor. H312 contacts heme b. W328 (tryptophan radical intermediate) is an active-site residue.

Belongs to the peroxidase family. Cytochrome c peroxidase subfamily. Heme b is required as a cofactor.

In terms of biological role, destroys radicals which are normally produced within the cells and which are toxic to biological systems. This chain is Putative heme-binding peroxidase, found in Debaryomyces hansenii (strain ATCC 36239 / CBS 767 / BCRC 21394 / JCM 1990 / NBRC 0083 / IGC 2968) (Yeast).